A 672-amino-acid polypeptide reads, in one-letter code: SHC SH2 domain-binding protein 1 (672 aa).

Residue A2 is modified to N-acetylalanine. A Phosphoserine modification is found at S5. T7 carries the phosphothreonine modification. S31, S42, S44, S47, and S273 each carry phosphoserine. PbH1 repeat units follow at residues 428-451 (GADI…LIVH), 452-473 (RGKT…TVRT), 474-496 (SAEF…EIYP), 497-518 (GSQC…LIKD), and 526-548 (IPKI…VLVK). S634 carries the phosphoserine modification.

As to quaternary structure, interacts directly with isoform p52shc of SHC1 via its SH2 domain. Interacts with TRIM71; leading to enhanced SHCBP1 protein stability. Interacts with both members of the centralspindlin complex, KIF23 and RACGAP1.

It is found in the midbody. Its subcellular location is the cytoplasm. The protein localises to the cytoskeleton. It localises to the spindle. Functionally, may play a role in signaling pathways governing cellular proliferation, cell growth and differentiation. May be a component of a novel signaling pathway downstream of Shc. Acts as a positive regulator of FGF signaling in neural progenitor cells. The sequence is that of SHC SH2 domain-binding protein 1 (SHCBP1) from Homo sapiens (Human).